Consider the following 765-residue polypeptide: uncharacterized protein (765 aa).

This is an uncharacterized protein from Methanocaldococcus jannaschii (strain ATCC 43067 / DSM 2661 / JAL-1 / JCM 10045 / NBRC 100440) (Methanococcus jannaschii).